The following is a 130-amino-acid chain: Small ribosomal subunit protein uS9 (130 aa).

It belongs to the universal ribosomal protein uS9 family.

In Magnetococcus marinus (strain ATCC BAA-1437 / JCM 17883 / MC-1), this protein is Small ribosomal subunit protein uS9.